A 480-amino-acid chain; its full sequence is Lysostaphin (480 aa).

The N-terminal stretch at methionine 1 to alanine 23 is a signal peptide. The propeptide occupies serine 24–arginine 234. 13 repeat units span residues alanine 49–threonine 61, alanine 62–threonine 74, alanine 75–threonine 87, alanine 88–threonine 100, alanine 101–threonine 113, alanine 114–threonine 126, alanine 127–threonine 139, alanine 140–threonine 152, alanine 153–threonine 165, alanine 166–threonine 178, alanine 179–threonine 191, alanine 192–threonine 204, and alanine 205–threonine 217. A 14 X 13 AA tandem repeats of A-E-V-E-T-S-K-[AP]-P-V-E-N-T region spans residues alanine 49 to arginine 230. The disordered stretch occupies residues valine 51–glutamate 219. One copy of the 14; approximate repeat lies at alanine 218–arginine 230. Zn(2+) contacts are provided by histidine 266 and aspartate 270. Histidine 347 is an active-site residue. Histidine 349 contacts Zn(2+). Positions serine 400–serine 468 constitute an SH3b domain.

The protein belongs to the peptidase M23B family. In terms of assembly, monomer. Zn(2+) serves as cofactor.

Its subcellular location is the secreted. It carries out the reaction Hydrolysis of the -Gly-|-Gly- bond in the pentaglycine inter-peptide link joining staphylococcal cell wall peptidoglycans.. Lyses staphylococcal cells by hydrolyzing the polyglycine interpeptide bridges of the peptidoglycan. The polypeptide is Lysostaphin (lss) (Staphylococcus staphylolyticus).